Consider the following 188-residue polypeptide: PRA1 family protein 3 (188 aa).

Met1 carries the N-acetylmethionine modification. Residues 1–35 lie on the Cytoplasmic side of the membrane; that stretch reads MEVQVAPLRSWEDFFPGSDRFGRPDFKDISKWNNR. The next 2 membrane-spanning stretches (helical) occupy residues 36–56 and 57–77; these read VVNN…AVVA and IVGF…ILVF. Over 78 to 93 the chain is Cytoplasmic; it reads LGFVWVSHNKDILRRM. Helical transmembrane passes span 94–114 and 115–135; these read KKQY…FLIS and YLGD…LMFI. Topologically, residues 136–188 are cytoplasmic; sequence HASLRLRNIKNKLENKKEEIGLKKTPMGIILDALEQQEDNINKLASYIPKVKE. The interval 136 to 188 is targeting to endoplasmic reticulum membrane; sequence HASLRLRNIKNKLENKKEEIGLKKTPMGIILDALEQQEDNINKLASYIPKVKE.

The protein belongs to the PRA1 family. Binds to prenylated RAB and Ras superfamily members.

The protein localises to the endoplasmic reticulum membrane. It localises to the cell membrane. Its subcellular location is the cytoplasm. The protein resides in the cytoskeleton. Regulates intracellular concentrations of taurine and glutamate. Negatively modulates SLC1A1/EAAC1 glutamate transport activity by decreasing its affinity for glutamate in a PKC activity-dependent manner. May be involved in membrane traffic. The sequence is that of PRA1 family protein 3 (ARL6IP5) from Gallus gallus (Chicken).